Here is a 314-residue protein sequence, read N- to C-terminus: uncharacterized protein (314 aa).

Positions 68–91 (EKKKKSSSFEKRDKRRVQLKEKSP) are enriched in basic and acidic residues. 2 disordered regions span residues 68 to 97 (EKKKKSSSFEKRDKRRVQLKEKSPLRTPRN) and 141 to 164 (MDVQSPSTMSTSKNNVRNAERPAS). The segment covering 144-157 (QSPSTMSTSKNNVR) has biased composition (polar residues).

It localises to the mitochondrion. This is an uncharacterized protein from Schizosaccharomyces pombe (strain 972 / ATCC 24843) (Fission yeast).